Consider the following 459-residue polypeptide: Cysteine--tRNA ligase (459 aa).

Cys-31 contacts Zn(2+). The short motif at 33-43 (PTVYDNPHIGN) is the 'HIGH' region element. Positions 216, 241, and 245 each coordinate Zn(2+). The 'KMSKS' region motif lies at 274-278 (KMSKS). Residue Lys-277 participates in ATP binding.

It belongs to the class-I aminoacyl-tRNA synthetase family. As to quaternary structure, monomer. It depends on Zn(2+) as a cofactor.

The protein resides in the cytoplasm. It carries out the reaction tRNA(Cys) + L-cysteine + ATP = L-cysteinyl-tRNA(Cys) + AMP + diphosphate. The polypeptide is Cysteine--tRNA ligase (Rickettsia massiliae (strain Mtu5)).